The primary structure comprises 224 residues: Cytochrome c biogenesis ATP-binding export protein CcmA (224 aa).

Residues 1 to 220 form the ABC transporter domain; the sequence is MQNAEAAPAL…EYAHAEVVGA (220 aa). Residue 40 to 47 coordinates ATP; it reads GANGSGKT.

It belongs to the ABC transporter superfamily. CcmA exporter (TC 3.A.1.107) family. The complex is composed of two ATP-binding proteins (CcmA) and two transmembrane proteins (CcmB).

The protein localises to the cell inner membrane. It catalyses the reaction heme b(in) + ATP + H2O = heme b(out) + ADP + phosphate + H(+). In terms of biological role, part of the ABC transporter complex CcmAB involved in the biogenesis of c-type cytochromes; once thought to export heme, this seems not to be the case, but its exact role is uncertain. Responsible for energy coupling to the transport system. This Bordetella parapertussis (strain 12822 / ATCC BAA-587 / NCTC 13253) protein is Cytochrome c biogenesis ATP-binding export protein CcmA.